Reading from the N-terminus, the 115-residue chain is Macrophage migration inhibitory factor (115 aa).

Catalysis depends on Pro-2, which acts as the Proton acceptor; via imino nitrogen. Residues Lys-33 and Ile-65 each contribute to the substrate site. Residue Lys-78 is modified to N6-acetyllysine; alternate. The residue at position 78 (Lys-78) is an N6-succinyllysine; alternate. Position 98 (Asn-98) interacts with substrate.

This sequence belongs to the MIF family. In terms of assembly, homotrimer. Interacts with CD74 and CXCR2 extracellular domain and COPS5. Interacts with the USO1 and BNIPL.

The protein localises to the secreted. It localises to the cytoplasm. It catalyses the reaction 3-phenylpyruvate = enol-phenylpyruvate. The catalysed reaction is L-dopachrome = 5,6-dihydroxyindole-2-carboxylate. Its function is as follows. Pro-inflammatory cytokine involved in the innate immune response to bacterial pathogens. The expression of MIF at sites of inflammation suggests a role as mediator in regulating the function of macrophages in host defense. Counteracts the anti-inflammatory activity of glucocorticoids. Has phenylpyruvate tautomerase and dopachrome tautomerase activity (in vitro), but the physiological substrate is not known. It is not clear whether the tautomerase activity has any physiological relevance, and whether it is important for cytokine activity. This Mus musculus (Mouse) protein is Macrophage migration inhibitory factor.